The sequence spans 678 residues: THO complex subunit 5 homolog B (678 aa).

2 disordered regions span residues 1–37 (MSSDSLKKRKPKVNRSEDGKRGRHDEQEGRYYSEEAE) and 294–329 (ALFKPPEDSQDDESDSDAEEEQTTKRRRPTLGVQLD). A Nuclear localization signal motif is present at residues 7–10 (KKRK). Over residues 14 to 37 (NRSEDGKRGRHDEQEGRYYSEEAE) the composition is skewed to basic and acidic residues. Residues 301–314 (DSQDDESDSDAEEE) show a composition bias toward acidic residues.

The protein belongs to the THOC5 family. As to quaternary structure, component of the THO subcomplex, which is composed of thoc1, thoc2, thoc3, thoc5, thoc6 and thoc7. Component of the transcription/export (TREX) complex at least composed of alyref/thoc4, ddx39b, sarnp/cip29, chtop and the THO subcomplex. Interacts with thoc7.

The protein localises to the nucleus. It is found in the nucleus speckle. The protein resides in the cytoplasm. Functionally, component of the THO subcomplex of the TREX complex which is thought to couple mRNA transcription, processing and nuclear export, and which specifically associates with spliced mRNA and not with unspliced pre-mRNA. Plays a key structural role in the oligomerization of the THO-ddx39b complex. TREX is recruited to spliced mRNAs by a transcription-independent mechanism, binds to mRNA upstream of the exon-junction complex (EJC) and is recruited in a splicing- and cap-dependent manner to a region near the 5' end of the mRNA where it functions in mRNA export to the cytoplasm via the TAP/NXF1 pathway. May be involved in cell differentiation. This chain is THO complex subunit 5 homolog B (thoc5-b), found in Xenopus laevis (African clawed frog).